A 221-amino-acid chain; its full sequence is Germin-like protein 8-2 (221 aa).

The signal sequence occupies residues 1–24; it reads MASSSFSFLLVAALLGLASWKAIA. The cysteines at positions 34 and 49 are disulfide-linked. Residues Asn-54 and Asn-79 are each glycosylated (N-linked (GlcNAc...) asparagine). Residues 64–215 enclose the Cupin type-1 domain; the sequence is AMLDKPRDTN…AFQVDKKIID (152 aa). Positions 112, 114, 119, and 160 each coordinate Mn(2+).

The protein belongs to the germin family. In terms of assembly, oligomer (believed to be a pentamer but probably hexamer).

The protein resides in the secreted. The protein localises to the extracellular space. It is found in the apoplast. In terms of biological role, plays a role in broad-spectrum disease resistance. Probably has no oxalate oxidase activity even if the active site is conserved. The polypeptide is Germin-like protein 8-2 (GER3) (Oryza sativa subsp. japonica (Rice)).